The sequence spans 436 residues: Phosphate-repressible acid phosphatase (436 aa).

Positions 1-20 are cleaved as a signal peptide; the sequence is MKGTAASALLIALSATAAQA. Residues Asn-227, Asn-283, and Asn-304 are each glycosylated (N-linked (GlcNAc...) asparagine).

Monomer.

The enzyme catalyses a phosphate monoester + H2O = an alcohol + phosphate. The polypeptide is Phosphate-repressible acid phosphatase (pacA) (Aspergillus niger).